The primary structure comprises 138 residues: Small ribosomal subunit protein uS9 (138 aa).

The span at 100–118 (PENRPPLKTEGYLTRDPRA) shows a compositional bias: basic and acidic residues. The interval 100–138 (PENRPPLKTEGYLTRDPRAKERKKYGLHKARKAPQYSKR) is disordered. A compositionally biased stretch (basic residues) spans 119-138 (KERKKYGLHKARKAPQYSKR).

Belongs to the universal ribosomal protein uS9 family.

This Trichormus variabilis (strain ATCC 29413 / PCC 7937) (Anabaena variabilis) protein is Small ribosomal subunit protein uS9.